A 135-amino-acid polypeptide reads, in one-letter code: ATP synthase epsilon chain (135 aa).

The protein belongs to the ATPase epsilon chain family. In terms of assembly, F-type ATPases have 2 components, CF(1) - the catalytic core - and CF(0) - the membrane proton channel. CF(1) has five subunits: alpha(3), beta(3), gamma(1), delta(1), epsilon(1). CF(0) has three main subunits: a, b and c.

It is found in the cell inner membrane. Its function is as follows. Produces ATP from ADP in the presence of a proton gradient across the membrane. This is ATP synthase epsilon chain from Rhizobium rhizogenes (strain K84 / ATCC BAA-868) (Agrobacterium radiobacter).